Here is a 432-residue protein sequence, read N- to C-terminus: MSTQVLIVGGGIGGLTLAAMCRRIGVSCRVLERSAALEPVGAGISLAPNALRALDQIGLYDYVRQEGQPVRKIRVYRNQTQWSEIDFQWLERTFGYPVYSIERHGFHRRLYDAAGGSETVNLGAEVAKVIPPQEEAEGVSVVLKDGRRYTGNVLVGADGVRSVVRRALMATINSPPGQSGAVGEDEDAADVIQFTGRVHLSGYTHPLDHLGPADEGIAYWMLYDRSILTTWPCRDHRQWFVGAVPSKLKDPNRSVWKHADHNTINQVYGSEYHPFAPDFHFRDVVKHAERVVASDVFHQTTFPPMAAGRIAMLGDASHAMTSFFGQGACQAIEDATELASALGMIDVRPTDAETILQGYRHSRERRGRDLVVFSDRFALLHTGRLLGSWGPFVRQMVYTWMPLWGWKWALQWLYGHQPTLVEQRNEAAKKTA.

FAD-binding residues include glutamate 32, arginine 103, aspartate 315, and alanine 328.

It belongs to the paxM FAD-dependent monooxygenase family. FAD is required as a cofactor.

It participates in secondary metabolite biosynthesis. Functionally, FAD-dependent monooxygenase; part of the gene cluster that mediates the biosynthesis of pyranonigrins, a family of antioxidative compounds. The first step of pyranonigrins biosynthesis is performed by the hybrid PKS-NRPS synthetase that condenses 6 malonyl-CoA units to an acetyl starter unit, to form a 1,3,5-trioxotetradecane-6,8-dienyl-ACP. The enoyl reductase (ER) domain of pynA is likely to be functional during the first two rounds of polyketide chain extension, to generate the saturated C-C bonds of the alkyl side chain. PynA subsequently forms the amide bond between the acyl chain and L-serine. Although pynA has a terminal reductase domain, it appears to require the thioesterase pynI for the release of the straight-chain intermediate from pynA via the formation of a tetramic acid pyranonigrin J. The methyltransferase pynC then coverts pyranonigrin J to pyranonigrin I via N-methylation. The FAD-dependent monooxygenase pynG catalyzes an epoxidation-mediated cyclization to form the dihydro-gamma-pyrone moiety, followed by pynD-catalyzed oxidation of the alcohol to the ketone and enolization to yield the characteristic tetramic acid-fused gamma-pyrone core of pyranonigrin H. Pyranonigrin H is substrate of pynH for dehydration-mediated exo-methylene formation from the serine side chain to produce pyranonigrin E, before the oxidase pynE reduces the exo-methylene of pyranonigrin E into a pendant methyl to form pyranonigrin G. The FAD-linked oxidoreductase pynB performs the reverse reaction and converts pyranonigrin G back to pyranonigrin E. In Aspergillus niger (strain ATCC MYA-4892 / CBS 513.88 / FGSC A1513), this protein is FAD-dependent monooxygenase pynG.